Here is a 161-residue protein sequence, read N- to C-terminus: Nucleotide-binding protein Gmet_3206 (161 aa).

It belongs to the YajQ family.

Its function is as follows. Nucleotide-binding protein. This chain is Nucleotide-binding protein Gmet_3206, found in Geobacter metallireducens (strain ATCC 53774 / DSM 7210 / GS-15).